Here is a 227-residue protein sequence, read N- to C-terminus: Sensory transduction protein RegX3 (227 aa).

The Response regulatory domain maps to 3–116 (SVLIVEDEES…ELIARIRAVL (114 aa)). Residue D52 is modified to 4-aspartylphosphate. Positions 128–227 (DGVLESGPVR…VRGLGYKLEG (100 aa)) form a DNA-binding region, ompR/PhoB-type.

In terms of processing, phosphorylated by SenX3.

Member of the two-component regulatory system SenX3/RegX3. Specifically binds to the promoter region of the senX3-regX3 operon. The chain is Sensory transduction protein RegX3 from Mycobacterium bovis (strain ATCC BAA-935 / AF2122/97).